Consider the following 94-residue polypeptide: Pyrimidine/purine nucleoside phosphorylase (94 aa).

It belongs to the nucleoside phosphorylase PpnP family.

The catalysed reaction is a purine D-ribonucleoside + phosphate = a purine nucleobase + alpha-D-ribose 1-phosphate. The enzyme catalyses adenosine + phosphate = alpha-D-ribose 1-phosphate + adenine. It catalyses the reaction cytidine + phosphate = cytosine + alpha-D-ribose 1-phosphate. It carries out the reaction guanosine + phosphate = alpha-D-ribose 1-phosphate + guanine. The catalysed reaction is inosine + phosphate = alpha-D-ribose 1-phosphate + hypoxanthine. The enzyme catalyses thymidine + phosphate = 2-deoxy-alpha-D-ribose 1-phosphate + thymine. It catalyses the reaction uridine + phosphate = alpha-D-ribose 1-phosphate + uracil. It carries out the reaction xanthosine + phosphate = alpha-D-ribose 1-phosphate + xanthine. Functionally, catalyzes the phosphorolysis of diverse nucleosides, yielding D-ribose 1-phosphate and the respective free bases. Can use uridine, adenosine, guanosine, cytidine, thymidine, inosine and xanthosine as substrates. Also catalyzes the reverse reactions. The polypeptide is Pyrimidine/purine nucleoside phosphorylase (Teredinibacter turnerae (strain ATCC 39867 / T7901)).